Consider the following 627-residue polypeptide: uncharacterized protein (627 aa).

2 disordered regions span residues 441-466 and 608-627; these read EAVP…QGEN and DLRG…TEDR. Basic and acidic residues predominate over residues 615–627; it reads DYERGKGESTEDR.

This is an uncharacterized protein from Homo sapiens (Human).